Reading from the N-terminus, the 215-residue chain is V-type ATP synthase subunit D (215 aa).

Belongs to the V-ATPase D subunit family.

In terms of biological role, produces ATP from ADP in the presence of a proton gradient across the membrane. In Anaeromyxobacter sp. (strain Fw109-5), this protein is V-type ATP synthase subunit D.